The following is a 223-amino-acid chain: Pyridoxine/pyridoxamine 5'-phosphate oxidase (223 aa).

Residues 8 to 11 (RVDY) and lysine 65 each bind substrate. Residues 60–65 (RTVLLK), 75–76 (YT), arginine 81, lysine 82, and glutamine 104 contribute to the FMN site. Residues tyrosine 122, arginine 126, and serine 130 each coordinate substrate. FMN contacts are provided by residues 139-140 (QS) and tryptophan 188. 194-196 (RLH) serves as a coordination point for substrate. Arginine 198 provides a ligand contact to FMN.

The protein belongs to the pyridoxamine 5'-phosphate oxidase family. As to quaternary structure, homodimer. It depends on FMN as a cofactor.

It carries out the reaction pyridoxamine 5'-phosphate + O2 + H2O = pyridoxal 5'-phosphate + H2O2 + NH4(+). The catalysed reaction is pyridoxine 5'-phosphate + O2 = pyridoxal 5'-phosphate + H2O2. It participates in cofactor metabolism; pyridoxal 5'-phosphate salvage; pyridoxal 5'-phosphate from pyridoxamine 5'-phosphate: step 1/1. It functions in the pathway cofactor metabolism; pyridoxal 5'-phosphate salvage; pyridoxal 5'-phosphate from pyridoxine 5'-phosphate: step 1/1. Functionally, catalyzes the oxidation of either pyridoxine 5'-phosphate (PNP) or pyridoxamine 5'-phosphate (PMP) into pyridoxal 5'-phosphate (PLP). The chain is Pyridoxine/pyridoxamine 5'-phosphate oxidase from Kineococcus radiotolerans (strain ATCC BAA-149 / DSM 14245 / SRS30216).